The primary structure comprises 167 residues: Small ribosomal subunit protein uS5 (167 aa).

An S5 DRBM domain is found at 12–75; it reads LEDQVVSINR…DAAKKSLIEV (64 aa).

It belongs to the universal ribosomal protein uS5 family. In terms of assembly, part of the 30S ribosomal subunit. Contacts proteins S4 and S8.

Functionally, with S4 and S12 plays an important role in translational accuracy. Its function is as follows. Located at the back of the 30S subunit body where it stabilizes the conformation of the head with respect to the body. The chain is Small ribosomal subunit protein uS5 from Lacticaseibacillus paracasei (strain ATCC 334 / BCRC 17002 / CCUG 31169 / CIP 107868 / KCTC 3260 / NRRL B-441) (Lactobacillus paracasei).